The chain runs to 1349 residues: Indole-3-acetaldehyde oxidase (1349 aa).

The 88-residue stretch at 7–94 (AAVVLAVNGK…RCSVTTSEGI (88 aa)) folds into the 2Fe-2S ferredoxin-type domain. Positions 46, 51, and 54 each coordinate [2Fe-2S] cluster. The region spanning 237 to 415 (VPVSDDGWYR…LSIFIPEWGS (179 aa)) is the FAD-binding PCMH-type domain.

It belongs to the xanthine dehydrogenase family. As to quaternary structure, aldehyde oxidases (AO) are homodimers and heterodimers of AO subunits. It depends on [2Fe-2S] cluster as a cofactor. The cofactor is FAD. Mo-molybdopterin serves as cofactor. Mostly expressed in coleoptiles, and, to a lower extent, in mesocotyl and roots.

It localises to the cytoplasm. It catalyses the reaction indole-3-acetaldehyde + O2 + H2O = (indol-3-yl)acetate + H2O2 + H(+). In terms of biological role, in higher plants aldehyde oxidases (AO) appear to be homo- and heterodimeric assemblies of AO subunits with probably different physiological functions. Involved in the biosynthesis of auxin. This Zea mays (Maize) protein is Indole-3-acetaldehyde oxidase (AO2).